A 436-amino-acid chain; its full sequence is Eukaryotic translation initiation factor 5 (436 aa).

Position 27 to 34 (27 to 34 (GKGNGIKT)) interacts with GTP. A disordered region spans residues 177 to 203 (NSDKGSSNDDDDDDWEPEPVEPNGMLS). Over residues 184–195 (NDDDDDDWEPEP) the composition is skewed to acidic residues. In terms of domain architecture, W2 spans 216–379 (EKSEEQRLDM…KEAEEETEEE (164 aa)). Positions 396 to 408 (LRQQKEKAAREAQ) are enriched in basic and acidic residues. Positions 396–436 (LRQQKEKAAREAQQKSAKATNGNAAAASGANDEEDLDIDDI) are disordered. The span at 409–425 (QKSAKATNGNAAAASGA) shows a compositional bias: low complexity. Positions 426-436 (NDEEDLDIDDI) are enriched in acidic residues.

This sequence belongs to the eIF-2-beta/eIF-5 family.

In terms of biological role, catalyzes the hydrolysis of GTP bound to the 40S ribosomal initiation complex (40S.mRNA.Met-tRNA[F].eIF-2.GTP) with the subsequent joining of a 60S ribosomal subunit resulting in the release of eIF-2 and the guanine nucleotide. The subsequent joining of a 60S ribosomal subunit results in the formation of a functional 80S initiation complex (80S.mRNA.Met-tRNA[F]). The chain is Eukaryotic translation initiation factor 5 from Caenorhabditis elegans.